An 819-amino-acid polypeptide reads, in one-letter code: Protein O-mannosyl-transferase tmem260 (819 aa).

Polar residues predominate over residues 1–10 (MNNSPTLSNT). The segment at 1–68 (MNNSPTLSNT…NNNNNIINVN (68 aa)) is disordered. Residues 15–68 (NNNNNSNSNSNSNNNNNNNNNNNNNSNNNNNNNNNVNRNVNNRNNNNNNIINVN) show a composition bias toward low complexity. N-linked (GlcNAc...) asparagine glycans are attached at residues Asn-18, Asn-38, and Asn-70. 7 helical membrane-spanning segments follow: residues 113–133 (IACIVLLFISCTIIYSMTQYP), 152–172 (VAHPPGYPLFTFLGYIFSHII), 185–205 (FMSSMIGSIASIFIYLTVYLW), 210–230 (WCGLLSAYMFTFSPLIWMYQI), 232–252 (GEVFSMNNMFVAMLMFLGVWY), 285–305 (LTNQHTLVLIVIPFAFWLMFI), and 316–336 (ILSNLVFYTLIGLSPYLLLFI). A glycan (N-linked (GlcNAc...) asparagine) is linked at Asn-349. The next 4 membrane-spanning stretches (helical) occupy residues 391–411 (LIIQFGYIGLALSLIGLLNLL), 427–447 (MIIFSFLFYITFFFNLCNLPI), 459–479 (FFMQPNVIISITMGLGIKSIF), and 505–525 (YLLPIIIILLVGNQIGFNYNL). Asn-531, Asn-686, Asn-693, and Asn-783 each carry an N-linked (GlcNAc...) asparagine glycan.

The protein belongs to the glycosyltransferase 117 (GT117) family.

The protein resides in the endoplasmic reticulum membrane. The enzyme catalyses a di-trans,poly-cis-dolichyl beta-D-mannosyl phosphate + L-seryl-[protein] = 3-O-(alpha-D-mannosyl)-L-seryl-[protein] + a di-trans,poly-cis-dolichyl phosphate + H(+). The catalysed reaction is a di-trans,poly-cis-dolichyl beta-D-mannosyl phosphate + L-threonyl-[protein] = 3-O-(alpha-D-mannosyl)-L-threonyl-[protein] + a di-trans,poly-cis-dolichyl phosphate + H(+). In terms of biological role, O-mannosyl-transferase that transfers mannosyl residues to the hydroxyl group of serine or threonine residues of proteins. The chain is Protein O-mannosyl-transferase tmem260 from Dictyostelium discoideum (Social amoeba).